Consider the following 435-residue polypeptide: Gap junction alpha-3 protein (435 aa).

Residues 2-15 lie within the membrane without spanning it; it reads GDWSFLGRLLENAQ. Residues 16 to 19 are Cytoplasmic-facing; it reads EHST. The chain crosses the membrane as a helical span at residues 20–40; that stretch reads VIGKVWLTVLFIFRILVLGAA. The Extracellular segment spans residues 41 to 71; it reads AEDVWGDEQSDFTCNTQQPGCENVCYDRAFP. 3 cysteine pairs are disulfide-bonded: C54–C192, C61–C186, and C65–C181. Residues 72–92 traverse the membrane as a helical segment; the sequence is ISHIRFWALQIIFVSTPTLIY. Over 93–152 the chain is Cytoplasmic; that stretch reads LGHVLHIVRMEEKKKEREEEEQLKRESPSPKEPPQDNPSSRDDRGRVRMAGALLRTYVFN. The segment covering 108–121 has biased composition (basic and acidic residues); it reads EREEEEQLKRESPS. Residues 108-136 form a disordered region; it reads EREEEEQLKRESPSPKEPPQDNPSSRDDR. A helical membrane pass occupies residues 153–173; it reads IIFKTLFEVGFIAGQYFLYGF. Topologically, residues 174-201 are extracellular; the sequence is ELKPLYRCDRWPCPNTVDCFISRPTEKT. The chain crosses the membrane as a helical span at residues 202 to 222; the sequence is IFIIFMLAVACASLLLNMLEI. Residues 223-435 are Cytoplasmic-facing; it reads YHLGWKKLKQ…GRARPEDLAI (213 aa). The tract at residues 332–435 is disordered; the sequence is AAERQPPALK…GRARPEDLAI (104 aa). Low complexity-rich tracts occupy residues 342-389 and 415-427; these read AYPA…ALAG and GRAS…SSGR.

This sequence belongs to the connexin family. Alpha-type (group II) subfamily. A hemichannel or connexon is composed of a hexamer of connexins. A functional gap junction is formed by the apposition of two hemichannels. Forms heteromeric channels with GJA8.

The protein localises to the cell membrane. Its subcellular location is the cell junction. The protein resides in the gap junction. Its function is as follows. Structural component of lens fiber gap junctions. Gap junctions are dodecameric channels that connect the cytoplasm of adjoining cells. They are formed by the docking of two hexameric hemichannels, one from each cell membrane. Small molecules and ions diffuse from one cell to a neighboring cell via the central pore. In Homo sapiens (Human), this protein is Gap junction alpha-3 protein (GJA3).